Here is a 108-residue protein sequence, read N- to C-terminus: Large ribosomal subunit protein uL24 (108 aa).

This sequence belongs to the universal ribosomal protein uL24 family. In terms of assembly, part of the 50S ribosomal subunit.

Its function is as follows. One of two assembly initiator proteins, it binds directly to the 5'-end of the 23S rRNA, where it nucleates assembly of the 50S subunit. In terms of biological role, one of the proteins that surrounds the polypeptide exit tunnel on the outside of the subunit. This chain is Large ribosomal subunit protein uL24, found in Geobacter sulfurreducens (strain ATCC 51573 / DSM 12127 / PCA).